Here is a 369-residue protein sequence, read N- to C-terminus: UDP-N-acetylglucosamine--N-acetylmuramyl-(pentapeptide) pyrophosphoryl-undecaprenol N-acetylglucosamine transferase (369 aa).

UDP-N-acetyl-alpha-D-glucosamine contacts are provided by residues 10–12 (TGG), N124, S195, I252, and Q297.

It belongs to the glycosyltransferase 28 family. MurG subfamily.

Its subcellular location is the cell membrane. The catalysed reaction is Mur2Ac(oyl-L-Ala-gamma-D-Glu-L-Lys-D-Ala-D-Ala)-di-trans,octa-cis-undecaprenyl diphosphate + UDP-N-acetyl-alpha-D-glucosamine = beta-D-GlcNAc-(1-&gt;4)-Mur2Ac(oyl-L-Ala-gamma-D-Glu-L-Lys-D-Ala-D-Ala)-di-trans,octa-cis-undecaprenyl diphosphate + UDP + H(+). The protein operates within cell wall biogenesis; peptidoglycan biosynthesis. Its function is as follows. Cell wall formation. Catalyzes the transfer of a GlcNAc subunit on undecaprenyl-pyrophosphoryl-MurNAc-pentapeptide (lipid intermediate I) to form undecaprenyl-pyrophosphoryl-MurNAc-(pentapeptide)GlcNAc (lipid intermediate II). This chain is UDP-N-acetylglucosamine--N-acetylmuramyl-(pentapeptide) pyrophosphoryl-undecaprenol N-acetylglucosamine transferase, found in Leuconostoc citreum (strain KM20).